Here is a 190-residue protein sequence, read N- to C-terminus: Potassium-transporting ATPase KdpC subunit (190 aa).

The helical transmembrane segment at 10–30 threads the bilayer; sequence TFIFLLLITGGVYPLLTTALG.

It belongs to the KdpC family. As to quaternary structure, the system is composed of three essential subunits: KdpA, KdpB and KdpC.

It localises to the cell inner membrane. Its function is as follows. Part of the high-affinity ATP-driven potassium transport (or Kdp) system, which catalyzes the hydrolysis of ATP coupled with the electrogenic transport of potassium into the cytoplasm. This subunit acts as a catalytic chaperone that increases the ATP-binding affinity of the ATP-hydrolyzing subunit KdpB by the formation of a transient KdpB/KdpC/ATP ternary complex. This is Potassium-transporting ATPase KdpC subunit from Escherichia coli O157:H7.